The primary structure comprises 311 residues: Methionyl-tRNA formyltransferase (311 aa).

110–113 (SLLP) contacts (6S)-5,6,7,8-tetrahydrofolate.

This sequence belongs to the Fmt family.

It carries out the reaction L-methionyl-tRNA(fMet) + (6R)-10-formyltetrahydrofolate = N-formyl-L-methionyl-tRNA(fMet) + (6S)-5,6,7,8-tetrahydrofolate + H(+). Attaches a formyl group to the free amino group of methionyl-tRNA(fMet). The formyl group appears to play a dual role in the initiator identity of N-formylmethionyl-tRNA by promoting its recognition by IF2 and preventing the misappropriation of this tRNA by the elongation apparatus. In Streptococcus pneumoniae (strain JJA), this protein is Methionyl-tRNA formyltransferase.